Reading from the N-terminus, the 412-residue chain is Diphosphomevalonate decarboxylase MVD1, peroxisomal (412 aa).

Position 23–26 (23–26 (YWGK)) interacts with (R)-5-diphosphomevalonate. Positions 40 to 48 (SVTLDPDHL) match the Peroxisomal targeting signal PTS2 motif. Residues Arg-78, 161-166 (SGSACR), and Thr-217 each bind (R)-5-diphosphomevalonate.

This sequence belongs to the diphosphomevalonate decarboxylase family. As to quaternary structure, homodimer.

The protein resides in the peroxisome. The catalysed reaction is (R)-5-diphosphomevalonate + ATP = isopentenyl diphosphate + ADP + phosphate + CO2. It functions in the pathway isoprenoid biosynthesis; isopentenyl diphosphate biosynthesis via mevalonate pathway; isopentenyl diphosphate from (R)-mevalonate: step 3/3. Performs the first committed step in the biosynthesis of isoprene-containing compounds such as sterols and terpenoids. Is specific for (R)-5-diphosphomevalonate (MVAPP). The catalytic efficiency with (R)-5-phosphomevalonate (MVAP) as substrate is 10000-fold lower than for MVAPP. Can complement a yeast mutant defective in MVD activity. The polypeptide is Diphosphomevalonate decarboxylase MVD1, peroxisomal (Arabidopsis thaliana (Mouse-ear cress)).